The primary structure comprises 207 residues: Urease accessory protein UreG (207 aa).

GTP is bound at residue 12–19; sequence GPVGAGKT.

This sequence belongs to the SIMIBI class G3E GTPase family. UreG subfamily. As to quaternary structure, homodimer. UreD, UreF and UreG form a complex that acts as a GTP-hydrolysis-dependent molecular chaperone, activating the urease apoprotein by helping to assemble the nickel containing metallocenter of UreC. The UreE protein probably delivers the nickel.

Its subcellular location is the cytoplasm. Facilitates the functional incorporation of the urease nickel metallocenter. This process requires GTP hydrolysis, probably effectuated by UreG. The chain is Urease accessory protein UreG from Cereibacter sphaeroides (strain KD131 / KCTC 12085) (Rhodobacter sphaeroides).